Reading from the N-terminus, the 271-residue chain is Protein FAM110D (271 aa).

Disordered regions lie at residues 1-83, 116-145, and 186-245; these read MLLA…RPDS, PRDA…APEA, and PQSW…PVSV. Residues 68–78 are compositionally biased toward basic residues; that stretch reads RPVRRGSGRRL. The segment covering 116 to 126 has biased composition (low complexity); the sequence is PRDAAPSSPAS. Residues 220–231 are compositionally biased toward gly residues; the sequence is SPGGAGGGGGSE.

It belongs to the FAM110 family.

The sequence is that of Protein FAM110D (FAM110D) from Homo sapiens (Human).